Reading from the N-terminus, the 489-residue chain is Inositol-pentakisphosphate 2-kinase (489 aa).

The EXKPK motif motif lies at 136-140 (EIKPK).

This sequence belongs to the IPK1 type 2 family.

The protein localises to the cytoplasm. The protein resides in the nucleus. It catalyses the reaction 1D-myo-inositol 1,3,4,5,6-pentakisphosphate + ATP = 1D-myo-inositol hexakisphosphate + ADP + H(+). Functionally, phosphorylates Ins(1,3,4,5,6)P5 at position 2 to form Ins(1,2,3,4,5,6)P6 (InsP6 or phytate). InsP6 is involved in many processes such as mRNA export, non-homologous end-joining, endocytosis, ion channel regulation. It also protects cells from TNF-alpha-induced apoptosis. The sequence is that of Inositol-pentakisphosphate 2-kinase (Ippk) from Rattus norvegicus (Rat).